The following is an 86-amino-acid chain: Weak neurotoxin 8 (86 aa).

An N-terminal signal peptide occupies residues 1–21; it reads MKTLLLTLVVVTIVCLDLGYT. 5 cysteine pairs are disulfide-bonded: cysteine 24/cysteine 45, cysteine 27/cysteine 32, cysteine 38/cysteine 63, cysteine 67/cysteine 78, and cysteine 79/cysteine 84.

Belongs to the three-finger toxin family. Ancestral subfamily. Orphan group II sub-subfamily. As to expression, expressed by the venom gland.

It is found in the secreted. Its function is as follows. Binds with low affinity to muscular (alpha-1-beta-1-delta-epsilon/CHRNA1-CHRNB1-CHRND-CHRNE) and very low affinity to neuronal (alpha-7/CHRNA7) nicotinic acetylcholine receptor (nAChR). The protein is Weak neurotoxin 8 of Naja sputatrix (Malayan spitting cobra).